A 592-amino-acid chain; its full sequence is MLRTHTCGALRKSDVGSPVTLCGWVDSKRDHGGAVFIDLRDRYGLTQVVIGPPEANEALIKQAGHVPNESVILIRGVVADRLEGKTNAKLETGEIEVRSEHFEILSASETPPFTPGQSDLPGEDLRLKYRFLDLRRKEMQQALIRRSEIIKCMRDYFAEHDFIDVETPILGRSTPEGARDYLVPSRVHPSNFYALPQSPQLYKQILMVAGFDRYVQVAKCFRDEDLRADRQPEFTQLDLEMSFVDSEDIIGLIDGLVAKTAKQVLGKDITLPLPRMTYEEAMRRFGSDAPDLRFGLEIVDVTSVAAKTDFRVFRGTADAGNFVRGINVKDSALKFSRRQIDELTAFVQQDFGAKGLAWFRVEDDGTLWSPIAKNFDEEHLAEIKALMGGEPGDLLMFLADTWEVTCKGLSGLRKRLAVELKLYEDGELNCSWVTEFPMFEKDEEAGRYVAMHHPFTAPLEEDLPLLKESPEKCRAQAYDLVINGSEAGGGTIRIHDSKVQSQVFELLGMDEETARDRFGFLLDALRFGAPPHGGIALGVDRWVMLFAGLENIREVIAFPKTQKAADMMTGAPGEVDADQLNELHLRTVSAKT.

Position 176 (Glu-176) interacts with L-aspartate. The interval 200–203 is aspartate; sequence QLYK. Arg-222 is an L-aspartate binding site. Residues 222–224 and Gln-231 contribute to the ATP site; that span reads RDE. L-aspartate is bound at residue His-452. Residue Glu-486 coordinates ATP. Position 493 (Arg-493) interacts with L-aspartate. 538 to 541 is an ATP binding site; it reads GVDR.

The protein belongs to the class-II aminoacyl-tRNA synthetase family. Type 1 subfamily. In terms of assembly, homodimer.

It is found in the cytoplasm. It carries out the reaction tRNA(Asx) + L-aspartate + ATP = L-aspartyl-tRNA(Asx) + AMP + diphosphate. Aspartyl-tRNA synthetase with relaxed tRNA specificity since it is able to aspartylate not only its cognate tRNA(Asp) but also tRNA(Asn). Reaction proceeds in two steps: L-aspartate is first activated by ATP to form Asp-AMP and then transferred to the acceptor end of tRNA(Asp/Asn). This Rhodopirellula baltica (strain DSM 10527 / NCIMB 13988 / SH1) protein is Aspartate--tRNA(Asp/Asn) ligase.